Reading from the N-terminus, the 238-residue chain is uncharacterized protein (238 aa).

The protein belongs to the mimivirus L74/L77/R857 family.

This is an uncharacterized protein from Acanthamoeba polyphaga mimivirus (APMV).